A 533-amino-acid polypeptide reads, in one-letter code: Chromosomal replication initiator protein DnaA (533 aa).

The domain I, interacts with DnaA modulators stretch occupies residues 1–72 (MNDFWQHCSA…DLARDFWNAP (72 aa)). The interval 72–196 (PIEVQFVLDP…EAADSMYERS (125 aa)) is domain II. The tract at residues 83-120 (AGQRSPAGATPLAPRAPLPSANPAPVAPGPASAPAVDA) is disordered. A compositionally biased stretch (pro residues) spans 96-110 (PRAPLPSANPAPVAP). Residues 111-120 (GPASAPAVDA) show a composition bias toward low complexity. Positions 197 to 413 (KLNPVLTFDN…GALRKILAYS (217 aa)) are domain III, AAA+ region. The ATP site is built by G241, G243, K244, and T245. Residues 414–533 (KFHGREITIE…LHVLEQTLKG (120 aa)) form a domain IV, binds dsDNA region.

It belongs to the DnaA family. As to quaternary structure, oligomerizes as a right-handed, spiral filament on DNA at oriC.

The protein localises to the cytoplasm. In terms of biological role, plays an essential role in the initiation and regulation of chromosomal replication. ATP-DnaA binds to the origin of replication (oriC) to initiate formation of the DNA replication initiation complex once per cell cycle. Binds the DnaA box (a 9 base pair repeat at the origin) and separates the double-stranded (ds)DNA. Forms a right-handed helical filament on oriC DNA; dsDNA binds to the exterior of the filament while single-stranded (ss)DNA is stabiized in the filament's interior. The ATP-DnaA-oriC complex binds and stabilizes one strand of the AT-rich DNA unwinding element (DUE), permitting loading of DNA polymerase. After initiation quickly degrades to an ADP-DnaA complex that is not apt for DNA replication. Binds acidic phospholipids. This is Chromosomal replication initiator protein DnaA from Burkholderia pseudomallei (strain 1710b).